The primary structure comprises 70 residues: Conotoxin Lt3.4 (70 aa).

The first 24 residues, 1-24, serve as a signal peptide directing secretion; sequence MLKMGVLLFTFLVLFPLAMFQLDA. Positions 25–54 are excised as a propeptide; sequence DQPVERYAENKQDLNRDERMKIMLSALRQR. Residue Q55 is modified to Pyrrolidone carboxylic acid. 3 disulfide bridges follow: C56–C68, C57–C66, and C62–C69.

It belongs to the conotoxin M superfamily. Expressed by the venom duct.

It is found in the secreted. This is Conotoxin Lt3.4 from Conus litteratus (Lettered cone).